Here is a 272-residue protein sequence, read N- to C-terminus: Formamidopyrimidine-DNA glycosylase (272 aa).

Pro2 acts as the Schiff-base intermediate with DNA in catalysis. Glu3 functions as the Proton donor in the catalytic mechanism. The active-site Proton donor; for beta-elimination activity is the Lys56. Residues His89, Arg108, and Lys149 each coordinate DNA. The segment at 234–268 (LAYGRAGEMCVNCETPLENLKLGQRASVFCPQCQP) adopts an FPG-type zinc-finger fold. Arg258 functions as the Proton donor; for delta-elimination activity in the catalytic mechanism.

The protein belongs to the FPG family. Monomer. Requires Zn(2+) as cofactor.

It carries out the reaction Hydrolysis of DNA containing ring-opened 7-methylguanine residues, releasing 2,6-diamino-4-hydroxy-5-(N-methyl)formamidopyrimidine.. The catalysed reaction is 2'-deoxyribonucleotide-(2'-deoxyribose 5'-phosphate)-2'-deoxyribonucleotide-DNA = a 3'-end 2'-deoxyribonucleotide-(2,3-dehydro-2,3-deoxyribose 5'-phosphate)-DNA + a 5'-end 5'-phospho-2'-deoxyribonucleoside-DNA + H(+). In terms of biological role, involved in base excision repair of DNA damaged by oxidation or by mutagenic agents. Acts as a DNA glycosylase that recognizes and removes damaged bases. Has a preference for oxidized purines, such as 7,8-dihydro-8-oxoguanine (8-oxoG). Has AP (apurinic/apyrimidinic) lyase activity and introduces nicks in the DNA strand. Cleaves the DNA backbone by beta-delta elimination to generate a single-strand break at the site of the removed base with both 3'- and 5'-phosphates. This is Formamidopyrimidine-DNA glycosylase from Acinetobacter baylyi (strain ATCC 33305 / BD413 / ADP1).